The chain runs to 366 residues: Peptide chain release factor 2 (366 aa).

Position 249 is an N5-methylglutamine (Gln-249).

The protein belongs to the prokaryotic/mitochondrial release factor family. Methylated by PrmC. Methylation increases the termination efficiency of RF2.

It is found in the cytoplasm. Functionally, peptide chain release factor 2 directs the termination of translation in response to the peptide chain termination codons UGA and UAA. This Petrotoga mobilis (strain DSM 10674 / SJ95) protein is Peptide chain release factor 2.